Here is a 263-residue protein sequence, read N- to C-terminus: MSTPSPQLLVAAAQQTLGMGKRKCPPRATCLHLAGEVLAVARGLKPAVLYDCNSAGVLALQSYLEELQGLGFLEPGLHILEIGENNFIVSPEYACQHLEQTLLGTVAFVDVSRSQPHPSVRSVDQLPDLKSLIADVITRFRGLKKDVSQGVSYTRLHSSDWNLCTVFGILLGYPVSYTFDLNREDDNCLTMTPLRVFTARISWLPGQPSILLYSFSVPESLFPALKNFLSAWEKELRTRFRAQNAFADLSISSEVVTLPAVAL.

It belongs to the UPF0739 family.

The sequence is that of UPF0739 protein C1orf74 homolog from Mus musculus (Mouse).